Consider the following 407-residue polypeptide: Phosphopentomutase (407 aa).

Positions 10, 306, 311, 347, 348, and 359 each coordinate Mn(2+).

This sequence belongs to the phosphopentomutase family. Mn(2+) serves as cofactor.

It localises to the cytoplasm. It catalyses the reaction 2-deoxy-alpha-D-ribose 1-phosphate = 2-deoxy-D-ribose 5-phosphate. The catalysed reaction is alpha-D-ribose 1-phosphate = D-ribose 5-phosphate. It participates in carbohydrate degradation; 2-deoxy-D-ribose 1-phosphate degradation; D-glyceraldehyde 3-phosphate and acetaldehyde from 2-deoxy-alpha-D-ribose 1-phosphate: step 1/2. Functionally, isomerase that catalyzes the conversion of deoxy-ribose 1-phosphate (dRib-1-P) and ribose 1-phosphate (Rib-1-P) to deoxy-ribose 5-phosphate (dRib-5-P) and ribose 5-phosphate (Rib-5-P), respectively. This is Phosphopentomutase from Buchnera aphidicola subsp. Acyrthosiphon pisum (strain 5A).